The following is a 395-amino-acid chain: Chaperone protein DnaJ 2 (395 aa).

Residues 10-75 (DYYADLGVSK…TKRREYDDLK (66 aa)) form the J domain. Residues 165–242 (GTTIPVELTG…CRGRGTVRRT (78 aa)) form a CR-type zinc finger. Zn(2+)-binding residues include C178, C181, C194, C197, C216, C219, C230, and C233. CXXCXGXG motif repeat units follow at residues 178 to 185 (CNTCHGSG), 194 to 201 (CGQCNGSG), 216 to 223 (CTNCGGTG), and 230 to 237 (CVDCRGRG).

This sequence belongs to the DnaJ family. Homodimer. The cofactor is Zn(2+).

The protein localises to the cytoplasm. Functionally, participates actively in the response to hyperosmotic and heat shock by preventing the aggregation of stress-denatured proteins and by disaggregating proteins, also in an autonomous, DnaK-independent fashion. Unfolded proteins bind initially to DnaJ; upon interaction with the DnaJ-bound protein, DnaK hydrolyzes its bound ATP, resulting in the formation of a stable complex. GrpE releases ADP from DnaK; ATP binding to DnaK triggers the release of the substrate protein, thus completing the reaction cycle. Several rounds of ATP-dependent interactions between DnaJ, DnaK and GrpE are required for fully efficient folding. Also involved, together with DnaK and GrpE, in the DNA replication of plasmids through activation of initiation proteins. In Corynebacterium efficiens (strain DSM 44549 / YS-314 / AJ 12310 / JCM 11189 / NBRC 100395), this protein is Chaperone protein DnaJ 2.